Reading from the N-terminus, the 224-residue chain is ATP phosphoribosyltransferase (224 aa).

Belongs to the ATP phosphoribosyltransferase family. Short subfamily. In terms of assembly, heteromultimer composed of HisG and HisZ subunits.

It localises to the cytoplasm. It carries out the reaction 1-(5-phospho-beta-D-ribosyl)-ATP + diphosphate = 5-phospho-alpha-D-ribose 1-diphosphate + ATP. It participates in amino-acid biosynthesis; L-histidine biosynthesis; L-histidine from 5-phospho-alpha-D-ribose 1-diphosphate: step 1/9. In terms of biological role, catalyzes the condensation of ATP and 5-phosphoribose 1-diphosphate to form N'-(5'-phosphoribosyl)-ATP (PR-ATP). Has a crucial role in the pathway because the rate of histidine biosynthesis seems to be controlled primarily by regulation of HisG enzymatic activity. The protein is ATP phosphoribosyltransferase of Cupriavidus taiwanensis (strain DSM 17343 / BCRC 17206 / CCUG 44338 / CIP 107171 / LMG 19424 / R1) (Ralstonia taiwanensis (strain LMG 19424)).